Here is a 570-residue protein sequence, read N- to C-terminus: Hydroxylamine reductase (570 aa).

Residues cysteine 5, cysteine 8, cysteine 17, and cysteine 23 each coordinate [4Fe-4S] cluster. Hybrid [4Fe-2O-2S] cluster is bound by residues histidine 266, glutamate 290, cysteine 334, cysteine 425, cysteine 453, cysteine 478, glutamate 513, and lysine 515. Position 425 is a cysteine persulfide (cysteine 425).

The protein belongs to the HCP family. [4Fe-4S] cluster is required as a cofactor. The cofactor is hybrid [4Fe-2O-2S] cluster.

Its subcellular location is the cytoplasm. It catalyses the reaction A + NH4(+) + H2O = hydroxylamine + AH2 + H(+). Its function is as follows. Catalyzes the reduction of hydroxylamine to form NH(3) and H(2)O. In Clostridium botulinum (strain 657 / Type Ba4), this protein is Hydroxylamine reductase.